The chain runs to 207 residues: Superoxide dismutase [Mn] (207 aa).

Positions 28, 76, 160, and 164 each coordinate Mn(2+).

It belongs to the iron/manganese superoxide dismutase family. Requires Mn(2+) as cofactor.

It is found in the secreted. The catalysed reaction is 2 superoxide + 2 H(+) = H2O2 + O2. In terms of biological role, destroys superoxide anion radicals which are normally produced within the cells and which are toxic to biological systems. This Mycolicibacterium paratuberculosis (strain ATCC BAA-968 / K-10) (Mycobacterium paratuberculosis) protein is Superoxide dismutase [Mn] (sodA).